The primary structure comprises 107 residues: CLAVATA3/ESR (CLE)-related protein 10 (107 aa).

The first 23 residues, Met-1–Ala-23, serve as a signal peptide directing secretion. Residues Asn-27 and Asn-30 are each glycosylated (N-linked (GlcNAc...) asparagine). The segment at Ser-73–Asn-107 is disordered. Basic and acidic residues predominate over residues Ile-87–Leu-97. Hydroxyproline is present on residues Pro-99 and Pro-102. A glycan (O-linked (Ara...) hydroxyproline) is linked at Pro-102.

This sequence belongs to the CLV3/ESR signal peptide family. Post-translationally, the O-glycosylation (arabinosylation) of the hydroxyproline Pro-102 enhances binding affinity of the CLE10p peptide for its receptor. Expressed in stems, apex, leaves, flowers, siliques and pollen.

It localises to the secreted. Its subcellular location is the extracellular space. In terms of biological role, extracellular signal peptide that regulates cell fate. Represses root apical meristem maintenance. Regulates the transition of protophloem cells from proliferation to differentiation, thus impinging on postembryonic growth capacity of the root meristem; this signaling pathway requires CRN and CLV2. The sequence is that of CLAVATA3/ESR (CLE)-related protein 10 from Arabidopsis thaliana (Mouse-ear cress).